A 274-amino-acid polypeptide reads, in one-letter code: Bis(5'-nucleosyl)-tetraphosphatase, symmetrical (274 aa).

Belongs to the Ap4A hydrolase family.

The enzyme catalyses P(1),P(4)-bis(5'-adenosyl) tetraphosphate + H2O = 2 ADP + 2 H(+). Hydrolyzes diadenosine 5',5'''-P1,P4-tetraphosphate to yield ADP. The polypeptide is Bis(5'-nucleosyl)-tetraphosphatase, symmetrical (Shewanella baltica (strain OS195)).